A 628-amino-acid polypeptide reads, in one-letter code: Phosphomethylpyrimidine synthase (628 aa).

Substrate is bound by residues Asn225, Met254, Tyr283, His319, 339-341 (SRG), 380-383 (DGLR), and Glu419. His423 lines the Zn(2+) pocket. Tyr446 serves as a coordination point for substrate. His487 is a Zn(2+) binding site. [4Fe-4S] cluster contacts are provided by Cys567, Cys570, and Cys575.

The protein belongs to the ThiC family. As to quaternary structure, homodimer. It depends on [4Fe-4S] cluster as a cofactor.

It carries out the reaction 5-amino-1-(5-phospho-beta-D-ribosyl)imidazole + S-adenosyl-L-methionine = 4-amino-2-methyl-5-(phosphooxymethyl)pyrimidine + CO + 5'-deoxyadenosine + formate + L-methionine + 3 H(+). Its pathway is cofactor biosynthesis; thiamine diphosphate biosynthesis. Functionally, catalyzes the synthesis of the hydroxymethylpyrimidine phosphate (HMP-P) moiety of thiamine from aminoimidazole ribotide (AIR) in a radical S-adenosyl-L-methionine (SAM)-dependent reaction. This Leptothrix cholodnii (strain ATCC 51168 / LMG 8142 / SP-6) (Leptothrix discophora (strain SP-6)) protein is Phosphomethylpyrimidine synthase.